We begin with the raw amino-acid sequence, 267 residues long: Acetyl-coenzyme A carboxylase carboxyl transferase subunit beta, chloroplastic (267 aa).

In terms of domain architecture, CoA carboxyltransferase N-terminal spans 12–267 (LWKKCDSCNI…TIHMILDLHN (256 aa)). Zn(2+) is bound by residues cysteine 16, cysteine 19, cysteine 35, and cysteine 38. The C4-type zinc-finger motif lies at 16-38 (CDSCNILISKFDFYKHDKVCPEC).

Belongs to the AccD/PCCB family. Acetyl-CoA carboxylase is a heterohexamer composed of biotin carboxyl carrier protein, biotin carboxylase and 2 subunits each of ACCase subunit alpha and ACCase plastid-coded subunit beta (accD). Requires Zn(2+) as cofactor.

The protein resides in the plastid. It localises to the chloroplast stroma. It catalyses the reaction N(6)-carboxybiotinyl-L-lysyl-[protein] + acetyl-CoA = N(6)-biotinyl-L-lysyl-[protein] + malonyl-CoA. The protein operates within lipid metabolism; malonyl-CoA biosynthesis; malonyl-CoA from acetyl-CoA: step 1/1. Functionally, component of the acetyl coenzyme A carboxylase (ACC) complex. Biotin carboxylase (BC) catalyzes the carboxylation of biotin on its carrier protein (BCCP) and then the CO(2) group is transferred by the transcarboxylase to acetyl-CoA to form malonyl-CoA. The protein is Acetyl-coenzyme A carboxylase carboxyl transferase subunit beta, chloroplastic of Cyanidium caldarium (Red alga).